The primary structure comprises 748 residues: Choline O-acetyltransferase (748 aa).

Over residues 1 to 10 (MGLRTAKKRG) the composition is skewed to basic residues. The tract at residues 1-89 (MGLRTAKKRG…EWCGAASAEA (89 aa)) is disordered. Basic and acidic residues predominate over residues 17–32 (WKREEGGGTRGRREVR). A compositionally biased stretch (gly residues) spans 40 to 53 (GGRGDPGDVGGPAG). Composition is skewed to low complexity over residues 54–65 (NPGCSPHPRAAT) and 73–89 (HTPA…SAEA). Position 125 is a phosphoserine (serine 125). Histidine 442 serves as the catalytic Proton acceptor. Serine 473 is modified (phosphoserine). CoA is bound by residues 520–532 (GKTF…CSPD), serine 558, and glutamine 659. Residues 727 to 748 (PTESKPLATKEKATRPSQGHQP) form a disordered region.

Belongs to the carnitine/choline acetyltransferase family.

The catalysed reaction is choline + acetyl-CoA = acetylcholine + CoA. Catalyzes the reversible synthesis of acetylcholine (ACh) from acetyl CoA and choline at cholinergic synapses. In Homo sapiens (Human), this protein is Choline O-acetyltransferase (CHAT).